The chain runs to 188 residues: Elongation factor P (188 aa).

The protein belongs to the elongation factor P family.

Its subcellular location is the cytoplasm. Its pathway is protein biosynthesis; polypeptide chain elongation. Functionally, involved in peptide bond synthesis. Stimulates efficient translation and peptide-bond synthesis on native or reconstituted 70S ribosomes in vitro. Probably functions indirectly by altering the affinity of the ribosome for aminoacyl-tRNA, thus increasing their reactivity as acceptors for peptidyl transferase. The protein is Elongation factor P of Anaplasma marginale (strain St. Maries).